Consider the following 128-residue polypeptide: Sm-like protein LSM1A (128 aa).

The region spanning 10-85 (FFSTSLAAYL…VVLIGELDVE (76 aa)) is the Sm domain.

This sequence belongs to the snRNP Sm proteins family. Component of the heptameric LSM1-LSM7 complex that forms a seven-membered ring structure with a donut shape. The LSM subunits are arranged in the order LSM1, LSM2, LSM3, LSM6, LSM5, LSM7 and LSM4. LSM1A subunit interacts only with its two neighboring subunits, LSM2 and LSM4. As to expression, expressed in roots, leaves, stems, flowers and siliques.

Its subcellular location is the cytoplasm. It localises to the P-body. Functionally, component of the cytoplasmic LSM1-LSM7 complex which is involved in mRNA degradation by promoting decapping and leading to accurate 5'-3' mRNA decay. LSM1A and LSM1B are essential for the formation of the cytoplasmic LSM1-LSM7 complex which regulates developmental gene expression by the decapping of specific development-related transcripts. Required for P-body formation during heat stress. This Arabidopsis thaliana (Mouse-ear cress) protein is Sm-like protein LSM1A.